The primary structure comprises 189 residues: UPF0494 membrane protein C977.06 (189 aa).

3 helical membrane passes run 78-98 (WPLL…NFEV), 120-140 (IWGP…GLIY), and 148-168 (AIPL…VAMV).

It belongs to the UPF0494 family.

The protein localises to the membrane. This Schizosaccharomyces pombe (strain 972 / ATCC 24843) (Fission yeast) protein is UPF0494 membrane protein C977.06.